We begin with the raw amino-acid sequence, 388 residues long: Putative O-antigen polymerase (388 aa).

9 helical membrane-spanning segments follow: residues 23–43 (IFYPAVCVNIIFALVLLGYEI), 57–77 (LIFLLCNVLTFTLSCLLTESV), 97–117 (VHNVGLLVISFSMIYICMRLS), 143–163 (NFSAYMQPIILTTFALFIWSK), 180–200 (IVFIFAIILNTGKQIVFMVII), 215–235 (VYLITAVGVLFSLYMLFLRGL), 312–332 (ISAELSYLMMVIHGCISGVLW), 338–358 (YISVKIFYSYFIYTFSFIFYH), and 361–381 (FMTNISSWIQITLCIIVFSQF).

Its subcellular location is the cell inner membrane. Functionally, may function in vitro as a polymerase that catalyzes the polymerization of the O-antigen repeat units on the periplasmic face of the inner membrane, leading to the formation of the lipid-linked O-antigen molecule. However, E.coli K12 strains do not normally produce the O-antigen in vivo due to mutations in the rfb gene cluster. K12 strains are phenotypically rough, their lipopolysaccharide having a complete core structure, but no O-antigen. The polypeptide is Putative O-antigen polymerase (Escherichia coli (strain K12)).